The chain runs to 489 residues: Glutamate--tRNA ligase (489 aa).

Positions 11 to 21 match the 'HIGH' region motif; the sequence is PSPTGHLHIGG. Residues 253–257 carry the 'KMSKS' region motif; sequence KLSKR. Position 256 (K256) interacts with ATP.

The protein belongs to the class-I aminoacyl-tRNA synthetase family. Glutamate--tRNA ligase type 1 subfamily. In terms of assembly, monomer.

It localises to the cytoplasm. The enzyme catalyses tRNA(Glu) + L-glutamate + ATP = L-glutamyl-tRNA(Glu) + AMP + diphosphate. Its function is as follows. Catalyzes the attachment of glutamate to tRNA(Glu) in a two-step reaction: glutamate is first activated by ATP to form Glu-AMP and then transferred to the acceptor end of tRNA(Glu). This Geobacillus stearothermophilus (Bacillus stearothermophilus) protein is Glutamate--tRNA ligase.